The sequence spans 174 residues: MIRKFLLIILAIFTLWVGGFGYYLYLINSYKLNSNTTNAIIVFADGGHKIETCMALLKAGYAPILFITGIESTERFKNLLMKHNVIEQQVILAPNKIMSEEDNIKEAINFIVTYNLTLITLVEHNYNIPFMLNKLQKAIPSSNNVYIVPYPVFSKPKYDVLLKSYHRYLMSIVN.

Residues 7–27 (LIILAIFTLWVGGFGYYLYLI) form a helical membrane-spanning segment.

Its subcellular location is the membrane. This is an uncharacterized protein from Rickettsia prowazekii (strain Madrid E).